The sequence spans 159 residues: Ribosomal RNA large subunit methyltransferase H (159 aa).

S-adenosyl-L-methionine-binding positions include L76, G108, and 127-132 (FGLLTL).

It belongs to the RNA methyltransferase RlmH family. Homodimer.

The protein resides in the cytoplasm. It catalyses the reaction pseudouridine(1915) in 23S rRNA + S-adenosyl-L-methionine = N(3)-methylpseudouridine(1915) in 23S rRNA + S-adenosyl-L-homocysteine + H(+). Specifically methylates the pseudouridine at position 1915 (m3Psi1915) in 23S rRNA. This is Ribosomal RNA large subunit methyltransferase H from Streptococcus pyogenes serotype M12 (strain MGAS2096).